Consider the following 660-residue polypeptide: DNA mismatch repair protein MutL (660 aa).

Belongs to the DNA mismatch repair MutL/HexB family.

In terms of biological role, this protein is involved in the repair of mismatches in DNA. It is required for dam-dependent methyl-directed DNA mismatch repair. May act as a 'molecular matchmaker', a protein that promotes the formation of a stable complex between two or more DNA-binding proteins in an ATP-dependent manner without itself being part of a final effector complex. This is DNA mismatch repair protein MutL from Streptococcus equi subsp. zooepidemicus (strain H70).